The sequence spans 136 residues: Mediator of RNA polymerase II transcription subunit 22 (136 aa).

Belongs to the Mediator complex subunit 22 family. In terms of assembly, component of the Mediator complex.

The protein localises to the nucleus. Functionally, component of the Mediator complex, a coactivator involved in the regulated transcription of nearly all RNA polymerase II-dependent genes. Mediator functions as a bridge to convey information from gene-specific regulatory proteins to the basal RNA polymerase II transcription machinery. Mediator is recruited to promoters by direct interactions with regulatory proteins and serves as a scaffold for the assembly of a functional preinitiation complex with RNA polymerase II and the general transcription factors. The sequence is that of Mediator of RNA polymerase II transcription subunit 22 (med22) from Schizosaccharomyces pombe (strain 972 / ATCC 24843) (Fission yeast).